Here is a 222-residue protein sequence, read N- to C-terminus: MKQKPAFIPYAGAQFEPEEMLSKSAEYYQFMDHRRTVREFSNRAIPLEVIENIVMTASTAPSGAHKQPWTFVVVSDPQIKAKIRQAAEKEEFESYNGRMSNEWLEDLQPFGTDWHKPFLEIAPYLIVVFRKAYDVLPDGTQRKNYYVQESVGIACGFLLAAIHQAGLVALTHTPSPMNFLQKILQRPENERPFLLVPVGYPAEGAMVPDLQRKDKAAVMVVY.

Residues Arg34–Arg38 and Pro61–Ser62 contribute to the FMN site. 3-iodo-L-tyrosine contacts are provided by Glu91, Tyr95, and Lys116. Residues Thr171–Thr173 and Arg212 each bind FMN.

Belongs to the nitroreductase family. In terms of assembly, homodimer. It depends on FMN as a cofactor.

It catalyses the reaction 2 iodide + L-tyrosine + 2 NADP(+) = 3,5-diiodo-L-tyrosine + 2 NADPH + H(+). The catalysed reaction is iodide + L-tyrosine + NADP(+) = 3-iodo-L-tyrosine + NADPH. It carries out the reaction 3-iodo-L-tyrosine + iodide + NADP(+) = 3,5-diiodo-L-tyrosine + NADPH + H(+). The enzyme catalyses L-tyrosine + chloride + NADP(+) = 3-chloro-L-tyrosine + NADPH. It catalyses the reaction bromide + L-tyrosine + NADP(+) = 3-bromo-L-tyrosine + NADPH. Its function is as follows. Catalyzes the dehalogenation of halotyrosines such as 3-iodo-L-tyrosine and 3,5-diiodo-L-tyrosine. Likely to also catalyze the dehalogenation of other halotyrosines such as 3-bromo-L-tyrosine, 3-chloro-L-tyrosine and 3-iodo-L-tyrosine. Activity towards 3-iodo-L-tyrosine is much stronger than activity towards 3,5-diiodo-L-tyrosine and 2-iodophenol. In Haliscomenobacter hydrossis (strain ATCC 27775 / DSM 1100 / LMG 10767 / O), this protein is Iodotyrosine deiodinase.